A 2904-amino-acid polypeptide reads, in one-letter code: Protein eyes shut homolog (2904 aa).

The signal sequence occupies residues 1-23 (MRNPKLAIIVFLLSCVIYGPVYS). 2 N-linked (GlcNAc...) asparagine glycosylation sites follow: asparagine 41 and asparagine 135. EGF-like domains lie at 174–216 (KPQL…RYCE), 217–259 (NVDG…VNCS), 263–298 (GNQN…TYCE), and 300–336 (KRLF…LNCE). Disulfide bonds link cysteine 178–cysteine 193, cysteine 187–cysteine 204, cysteine 206–cysteine 215, cysteine 221–cysteine 232, cysteine 226–cysteine 247, and cysteine 249–cysteine 258. Asparagine 257 and asparagine 266 each carry an N-linked (GlcNAc...) asparagine glycan. 6 disulfides stabilise this stretch: cysteine 267–cysteine 276, cysteine 271–cysteine 286, cysteine 288–cysteine 297, cysteine 304–cysteine 315, cysteine 309–cysteine 324, and cysteine 326–cysteine 335. The N-linked (GlcNAc...) asparagine glycan is linked to asparagine 362. EGF-like domains are found at residues 375–411 (QAEV…KNCE), 413–451 (IIDF…EFCQ), and 453–496 (LENA…PYCE). 12 disulfides stabilise this stretch: cysteine 379–cysteine 390, cysteine 384–cysteine 399, cysteine 401–cysteine 410, cysteine 417–cysteine 430, cysteine 424–cysteine 439, cysteine 441–cysteine 450, cysteine 457–cysteine 470, cysteine 464–cysteine 484, cysteine 486–cysteine 495, cysteine 502–cysteine 513, cysteine 507–cysteine 522, and cysteine 524–cysteine 533. One can recognise an EGF-like 8; calcium-binding domain in the interval 498–534 (EVNECDSSPCQHQGTCTDFVGYYKCTCPSGYTGIDCE). The N-linked (GlcNAc...) asparagine glycan is linked to asparagine 544. Positions 565–603 (HTPCPHYLQPCANGGHCVLHNITSYSCVCAPGWTGATCL) constitute an EGF-like 9 domain. 78 disulfide bridges follow: cysteine 568–cysteine 581, cysteine 575–cysteine 591, cysteine 593–cysteine 602, cysteine 609–cysteine 620, cysteine 614–cysteine 629, cysteine 631–cysteine 640, cysteine 645–cysteine 656, cysteine 650–cysteine 665, cysteine 667–cysteine 676, cysteine 683–cysteine 694, cysteine 688–cysteine 703, cysteine 705–cysteine 714, cysteine 721–cysteine 732, cysteine 726–cysteine 741, cysteine 743–cysteine 752, cysteine 759–cysteine 772, cysteine 764–cysteine 781, cysteine 783–cysteine 792, cysteine 799–cysteine 810, cysteine 804–cysteine 819, cysteine 821–cysteine 830, cysteine 837–cysteine 848, cysteine 842–cysteine 857, cysteine 859–cysteine 868, cysteine 875–cysteine 886, cysteine 880–cysteine 895, cysteine 897–cysteine 906, cysteine 913–cysteine 924, cysteine 918–cysteine 933, cysteine 935–cysteine 944, cysteine 951–cysteine 962, cysteine 956–cysteine 971, cysteine 973–cysteine 982, cysteine 987–cysteine 999, cysteine 993–cysteine 1014, cysteine 1016–cysteine 1025, cysteine 1032–cysteine 1042, cysteine 1037–cysteine 1051, cysteine 1053–cysteine 1062, cysteine 1069–cysteine 1080, cysteine 1074–cysteine 1089, cysteine 1091–cysteine 1100, cysteine 1107–cysteine 1118, cysteine 1112–cysteine 1127, cysteine 1129–cysteine 1138, cysteine 1145–cysteine 1156, cysteine 1150–cysteine 1167, cysteine 1169–cysteine 1178, cysteine 1185–cysteine 1198, cysteine 1192–cysteine 1208, cysteine 1210–cysteine 1219, cysteine 1226–cysteine 1237, cysteine 1231–cysteine 1246, cysteine 1248–cysteine 1257, cysteine 1264–cysteine 1275, cysteine 1269–cysteine 1284, cysteine 1286–cysteine 1295, cysteine 1302–cysteine 1313, cysteine 1307–cysteine 1322, cysteine 1324–cysteine 1333, cysteine 1340–cysteine 1351, cysteine 1345–cysteine 1360, cysteine 1362–cysteine 1371, cysteine 1378–cysteine 1388, cysteine 1383–cysteine 1397, cysteine 1399–cysteine 1408, cysteine 1415–cysteine 1426, cysteine 1420–cysteine 1435, cysteine 1437–cysteine 1446, cysteine 1453–cysteine 1469, cysteine 1463–cysteine 1479, cysteine 1481–cysteine 1490, cysteine 1497–cysteine 1508, cysteine 1502–cysteine 1517, cysteine 1519–cysteine 1528, cysteine 1535–cysteine 1545, cysteine 1540–cysteine 1556, and cysteine 1558–cysteine 1567. An N-linked (GlcNAc...) asparagine glycan is attached at asparagine 585. The region spanning 605-641 (NINECVQHRCQNRATCVDEVGGYSCLCGHGYTGVHCE) is the EGF-like 10; calcium-binding domain. In terms of domain architecture, EGF-like 11 spans 642–677 (LDFCSGHQCSEHAVCVDQQHNYTCRCMLGYEGTLCE). A glycan (N-linked (GlcNAc...) asparagine) is linked at asparagine 662. Residues 679–715 (ETDECKSAPCTNNATCIDLVAGYQCLCAPGFKGRTCS) enclose the EGF-like 12; calcium-binding domain. N-linked (GlcNAc...) asparagine glycosylation is present at asparagine 691. EGF-like domains are found at residues 717 to 753 (SMNE…HDCS), 755 to 793 (PATG…LFCE), and 795 to 831 (SINH…RLCE). The EGF-like 16; calcium-binding domain maps to 833–869 (NIDDCLDKPCGALSICKDGINAYDCFCAPGFVGNNCE). An EGF-like 17; calcium-binding domain is found at 871-907 (EVNECLSQPCQNGASCSDELNSFSCLCLAGTTGSLCE). The 37-residue stretch at 909-945 (NIDECQSSPCMNNGTCLDLSDGFKCICPSGFSGPECS) folds into the EGF-like 18; calcium-binding domain. N-linked (GlcNAc...) asparagine glycosylation is present at asparagine 921. The 37-residue stretch at 947–983 (DINECVSYPCKNGGSCIDQPGNYYCRCLAPFKGLNCE) folds into the EGF-like 19; calcium-binding domain. Positions 984-1026 (LLPCEAVNPCDNGAECVEEADLVLFPLGFQCRCRKGFTGPRCE) constitute an EGF-like 20 domain. Residues 1028–1063 (NIDECSSNPCLNGFCYDAVDGFYCLCNPGYAGVRCE) enclose the EGF-like 21; calcium-binding domain. The region spanning 1065–1101 (HINDCASNMCENNSTCVDLHLSYNCLCLPGWEGEYCQ) is the EGF-like 22 domain. Residue asparagine 1077 is glycosylated (N-linked (GlcNAc...) asparagine). One can recognise an EGF-like 23; calcium-binding domain in the interval 1103–1139 (ETNECLSNPCKNNATCTDLLNAYRCVCPQGWTGLDCD). Asparagine 1115 carries an N-linked (GlcNAc...) asparagine glycan. EGF-like domains follow at residues 1141-1179 (DVKE…PLCE) and 1181-1220 (PYDP…TRCE). A glycan (N-linked (GlcNAc...) asparagine) is linked at asparagine 1195. Residues 1222-1258 (DSDDCVSRPCQNRGICVDGVNSYSCFCEPGFSGLHCE) enclose the EGF-like 26; calcium-binding domain. The EGF-like 27; calcium-binding domain maps to 1260 to 1296 (DINECASNPCQNQAVCQDLVNGFQCSCVPGYFGPHCN). The region spanning 1298–1334 (DVNECDSSPCLHESVCINKPGGFACVCSAGFSGKWCE) is the EGF-like 28; calcium-binding domain. The region spanning 1336–1372 (NVDECKSNPCRNNGSCIDGLNGYQCVCSRGFMGDHCE) is the EGF-like 29; calcium-binding domain. An N-linked (GlcNAc...) asparagine glycan is attached at asparagine 1348. Positions 1374-1409 (NTDECSSGPCVHGSCLDEIDAFSCQCEVGWTGHRCQ) constitute an EGF-like 30; calcium-binding domain. Residues 1411–1447 (NINECEAHPCLNGGSCVDLLDKYACICADGFTGKNCD) form the EGF-like 31; calcium-binding domain. The 43-residue stretch at 1449–1491 (DQNVCLQTSLNFSLCFNGGTCVDGPGVNFTCSCRPGFMGDFCE) folds into the EGF-like 32 domain. Residues asparagine 1459 and asparagine 1476 are each glycosylated (N-linked (GlcNAc...) asparagine). Residues 1493–1529 (EMNECCSEPCFNGAICQDLINGYQCHCRPGWTGLHCE) enclose the EGF-like 33; calcium-binding domain. One can recognise an EGF-like 34 domain in the interval 1531-1568 (DINECLLQPCNQGMCIQNEPGHGYTCFCRPGFVGENCE). 3 N-linked (GlcNAc...) asparagine glycosylation sites follow: asparagine 1591, asparagine 1755, and asparagine 1788. The Laminin G-like 1 domain occupies 1640 to 1818 (ASFGGYSGNS…AIARNNVDNC (179 aa)). 4 disulfides stabilise this stretch: cysteine 1792/cysteine 1818, cysteine 1860/cysteine 1871, cysteine 1865/cysteine 1885, and cysteine 1887/cysteine 1896. The 42-residue stretch at 1856-1897 (PAPVCPQGICLNGGTCRPVSLPSGASSFFCDCPLHFTGRLCE) folds into the EGF-like 35 domain. The Laminin G-like 2 domain maps to 1902 to 2102 (VFSPRFDGNS…NIQNCDAAVC (201 aa)). N-linked (GlcNAc...) asparagine glycans are attached at residues asparagine 2025 and asparagine 2064. Disulfide bonds link cysteine 2071-cysteine 2102, cysteine 2102-cysteine 2113, cysteine 2107-cysteine 2122, cysteine 2124-cysteine 2133, cysteine 2138-cysteine 2149, cysteine 2143-cysteine 2159, and cysteine 2161-cysteine 2170. EGF-like domains follow at residues 2098–2134 (DAAV…KLCQ) and 2135–2171 (FTAC…LLCD). N-linked (GlcNAc...) asparagine glycosylation is found at asparagine 2175 and asparagine 2216. The Laminin G-like 3 domain maps to 2182–2372 (SGLDEFGYSS…PLSGRNVGQC (191 aa)). 7 cysteine pairs are disulfide-bonded: cysteine 2339-cysteine 2372, cysteine 2377-cysteine 2388, cysteine 2382-cysteine 2397, cysteine 2399-cysteine 2408, cysteine 2415-cysteine 2431, cysteine 2425-cysteine 2440, and cysteine 2442-cysteine 2451. 2 consecutive EGF-like domains span residues 2373–2409 (GVNP…ALCS) and 2411–2452 (KVSF…LHCQ). The Laminin G-like 4 domain maps to 2459–2642 (DPFFSGNQSS…NVGDWDGTAC (184 aa)). N-linked (GlcNAc...) asparagine glycans are attached at residues asparagine 2465, asparagine 2528, and asparagine 2570. 2 EGF-like domains span residues 2638–2675 (DGTA…SRCQ) and 2676–2714 (QSIQ…THCD). 6 disulfide bridges follow: cysteine 2642-cysteine 2653, cysteine 2647-cysteine 2663, cysteine 2665-cysteine 2674, cysteine 2680-cysteine 2691, cysteine 2685-cysteine 2702, and cysteine 2704-cysteine 2713. The N-linked (GlcNAc...) asparagine glycan is linked to asparagine 2694. Positions 2719–2894 (LKTIRFIGNS…TKQLQFLQTC (176 aa)) constitute a Laminin G-like 5 domain. Asparagine 2750 and asparagine 2816 each carry an N-linked (GlcNAc...) asparagine glycan.

Belongs to the EYS family. In terms of tissue distribution, expressed in retina where it localizes between the retinal pigment epithelium and the outer nuclear layer (at protein level).

The protein localises to the cell projection. The protein resides in the cilium. It localises to the cytoplasm. It is found in the cytoskeleton. Its subcellular location is the cilium axoneme. The protein localises to the secreted. The protein resides in the extracellular space. It localises to the extracellular matrix. It is found in the interphotoreceptor matrix. In terms of biological role, required to maintain the integrity of photoreceptor cells. Specifically required for normal morphology of the photoreceptor ciliary pocket, and might thus facilitate protein trafficking between the photoreceptor inner and outer segments via the transition zone. The protein is Protein eyes shut homolog of Danio rerio (Zebrafish).